A 117-amino-acid polypeptide reads, in one-letter code: MPSPGTVCSLLLLGMLWLDLAMAGSSFLSPEHQRAQQRKESKKPPAKLQPRALGGWLRPEDGDQAEGAEDELEIQFNAPFDVGIKLSGVQYQQHSQALGKFLQDILWEEAKEAPADK.

A signal peptide spans 1–23 (MPSPGTVCSLLLLGMLWLDLAMA). S26 is lipidated: O-decanoyl serine; alternate. S26 carries O-hexanoyl serine; alternate lipidation. The O-octanoyl serine; alternate moiety is linked to residue S26. Positions 29–67 (SPEHQRAQQRKESKKPPAKLQPRALGGWLRPEDGDQAEG) are disordered. Over residues 31-43 (EHQRAQQRKESKK) the composition is skewed to basic and acidic residues. Residues 52–75 (ALGGWLRPEDGDQAEGAEDELEIQ) constitute a propeptide, removed in mature form. L98 is modified (leucine amide). A propeptide spans 99–117 (GKFLQDILWEEAKEAPADK) (removed in mature form).

It belongs to the motilin family. In terms of processing, O-octanoylated by GOAT/MBOAT4. O-octanoylation is essential for ghrelin activity. Amidation of Leu-98 is essential for obestatin activity.

Its subcellular location is the secreted. Functionally, ghrelin is the ligand for growth hormone secretagogue receptor type 1 (GHSR). Induces the release of growth hormone from the pituitary. Has an appetite-stimulating effect, induces adiposity and stimulates gastric acid secretion. Involved in growth regulation. Its function is as follows. Obestatin may be the ligand for GPR39. May have an appetite-reducing effect resulting in decreased food intake. May reduce gastric emptying activity and jejunal motility. This chain is Appetite-regulating hormone (GHRL), found in Papio hamadryas (Hamadryas baboon).